The sequence spans 473 residues: Glutamate--tRNA ligase 2 (473 aa).

Residues 11–21 (PSPTGYLHIGG) carry the 'HIGH' region motif. Residues 113-133 (KARAEGRPPRYDGRWRDRDPS) show a composition bias toward basic and acidic residues. The tract at residues 113 to 136 (KARAEGRPPRYDGRWRDRDPSEAP) is disordered. The short motif at 240–244 (KLSKR) is the 'KMSKS' region element. Residue Lys-243 coordinates ATP.

The protein belongs to the class-I aminoacyl-tRNA synthetase family. Glutamate--tRNA ligase type 1 subfamily. As to quaternary structure, monomer.

The protein localises to the cytoplasm. The catalysed reaction is tRNA(Glu) + L-glutamate + ATP = L-glutamyl-tRNA(Glu) + AMP + diphosphate. Its function is as follows. Catalyzes the attachment of glutamate to tRNA(Glu) in a two-step reaction: glutamate is first activated by ATP to form Glu-AMP and then transferred to the acceptor end of tRNA(Glu). The sequence is that of Glutamate--tRNA ligase 2 from Brucella suis biovar 1 (strain 1330).